The chain runs to 1730 residues: SH3 and multiple ankyrin repeat domains protein 3 (1730 aa).

The intramolecular interaction with the ANK repeats stretch occupies residues 1 to 75; sequence MDGPGASAVV…KFLDEERLLQ (75 aa). A Phosphotyrosine modification is found at Tyr122. ANK repeat units follow at residues 148 to 178, 182 to 211, 215 to 245, 249 to 278, 282 to 311, and 315 to 345; these read SGECPLSLAAQLDNATDLLKVLRNGGAHLDF, DGLTAVHCATRQRNAGALTTLLDLGASPDY, RGLTPLYHSALGGGDALCCELLLHDHAQLGT, NGWQEIHQACRFGHVQHLEHLLFYGANMGA, SGNTALHICALYNQESCARVLLFRGANKDV, and NSQTAFQVAIIAGNFELAEVIKTHKDSDVVP. The disordered stretch occupies residues 354–466; the sequence is KRRRLAGPSG…PPPRGPKRKL (113 aa). 4 positions are modified to phosphoserine: Ser373, Ser375, Ser387, and Ser394. A compositionally biased stretch (basic and acidic residues) spans 404–415; that stretch reads LQEEKDRDRDGE. Residues 444-460 are compositionally biased toward pro residues; it reads APGPGPASPAPPAPPPR. Residues 470 to 529 enclose the SH3 domain; that stretch reads VPGRKFIAVKAHSPQGEGEIPLHRGEAVKVLSIGEGGFWEGTVKGRTGWFPADCVEEVQM. Phosphoserine is present on Ser482. Tyr555 carries the phosphotyrosine modification. The region spanning 570–664 is the PDZ domain; the sequence is VAILQKRDHE…RLVMKVVSVT (95 aa). The disordered stretch occupies residues 664 to 688; the sequence is TRKPEEDGARRRAPPPPKRAPSTTL. Positions 677–684 are required for interaction with ABI1; the sequence is PPPPKRAP. Phosphoserine occurs at positions 694, 781, 790, and 801. Disordered stretches follow at residues 760-1460 and 1475-1524; these read QGLP…AAGP and GDPV…SLLD. The span at 812-844 shows a compositional bias: pro residues; it reads IPPPPQTAPPPPPAPYYFDSGPPPTFSPPPPPG. Low complexity predominate over residues 857-869; the sequence is GLEARLGAGAAGL. A phosphoserine mark is found at Ser890 and Ser897. Residue Thr912 is modified to Phosphothreonine. A Phosphotyrosine modification is found at Tyr930. Arg965 carries the asymmetric dimethylarginine modification. Residue Ser995 is modified to Phosphoserine. Positions 1016 to 1026 are enriched in basic and acidic residues; sequence VKERRLEERRR. Residues 1078 to 1092 show a composition bias toward low complexity; it reads LKPLVGGPSLGPSGS. Polar residues predominate over residues 1122–1131; that stretch reads SQTPSRSPTP. At Thr1130 the chain carries Phosphothreonine. Ser1134, Ser1159, Ser1163, and Ser1166 each carry phosphoserine. Residues 1174-1194 are compositionally biased toward basic and acidic residues; sequence ARREAEKPPREERKSPEDKKS. A Phosphothreonine modification is found at Thr1234. Positions 1235–1250 are enriched in low complexity; sequence PELAPAPMQAAAVAEP. Composition is skewed to pro residues over residues 1251-1261 and 1321-1333; these read MPSPRAQPPGS and TPPPGPGPLPTTV. Residue Ser1253 is modified to Phosphoserine. The span at 1360–1370 shows a compositional bias: basic and acidic residues; sequence ADTRSSSDPHL. A compositionally biased stretch (low complexity) spans 1371-1392; sequence ETTSTISTVSSMSTLSSESGEL. The short motif at 1410–1416 is the SH3-binding element; sequence PPVPPKP. Phosphoserine is present on Ser1420. Residues 1494–1514 adopt a coiled-coil conformation; that stretch reads ISELSSRLQQLNKDTRSLGEE. The span at 1495 to 1505 shows a compositional bias: polar residues; sequence SELSSRLQQLN. Phosphoserine occurs at positions 1510, 1521, 1529, and 1539. Disordered regions lie at residues 1546–1584 and 1627–1663; these read ISAQRSPGGPGGGASYSVRPSGRYPVARRAPSPVKPASL and VRSVSARSRSPSPSPLPSPSPGSGPSAGPRRPFQQKP. The segment covering 1627-1637 has biased composition (low complexity); it reads VRSVSARSRSP. Phosphoserine occurs at positions 1634, 1636, and 1638. The segment covering 1638–1648 has biased composition (pro residues); that stretch reads SPSPLPSPSPG. The span at 1649-1658 shows a compositional bias: low complexity; that stretch reads SGPSAGPRRP. Residues 1667-1730 enclose the SAM domain; the sequence is WSKFDVGDWL…ERALRQLDGS (64 aa).

Belongs to the SHANK family. In terms of assembly, may homomultimerize via its SAM domain. Interacts with BAIAP2, DBNL and SLC17A7/VGLUT1. Interacts with DLGAP1/GKAP, GRM1/MGLUR1, GRM5/MGLUR5 and LZTS3 C-termini via its PDZ domain. Interacts with ABI1, HOMER1, HOMER2, HOMER3 and CTTN/cortactin SH3 domain. Is part of a complex with DLG4/PSD-95 and DLGAP1/GKAP. Interacts (via PDZ domain) with the GRIA1 subunit of the AMPA receptor (via PDZ-binding motif). Interacts with WASF1 and CYFIP2; the interactions mediate the association of SHANK3 with the WAVE1 complex. Interacts with ARPC2; the interaction probably mediates the association of SHANK3 with the Arp2/3 complex. Interacts (via ANK repeats) with SHARPIN and SPTAN1. Interacts (via PDZ domain) with ARHGAP44 (probably via PDZ-binding motif); the interaction takes place in dendritic spines and promotes GRIA1 exocytosis. Interacts with CAMK2A. Interacts with DIP2A. Interacts with ADGRL3. In terms of tissue distribution, in brain, highly expressed in striatum, thalamus, hippocampus and granule cells of the cerebellum.

It localises to the cytoplasm. Its subcellular location is the synapse. It is found in the postsynaptic density. The protein localises to the cell projection. The protein resides in the dendritic spine. Major scaffold postsynaptic density protein which interacts with multiple proteins and complexes to orchestrate the dendritic spine and synapse formation, maturation and maintenance. Interconnects receptors of the postsynaptic membrane including NMDA-type and metabotropic glutamate receptors via complexes with GKAP/PSD-95 and HOMER, respectively, and the actin-based cytoskeleton. Plays a role in the structural and functional organization of the dendritic spine and synaptic junction through the interaction with Arp2/3 and WAVE1 complex as well as the promotion of the F-actin clusters. By way of this control of actin dynamics, participates in the regulation of developing neurons growth cone motility and the NMDA receptor-signaling. Also modulates GRIA1 exocytosis and GRM5/MGLUR5 expression and signaling to control the AMPA and metabotropic glutamate receptor-mediated synaptic transmission and plasticity. May be required at an early stage of synapse formation and be inhibited by IGF1 to promote synapse maturation. This chain is SH3 and multiple ankyrin repeat domains protein 3 (Shank3), found in Mus musculus (Mouse).